The sequence spans 740 residues: Ethylene receptor 1 (740 aa).

The next 3 helical transmembrane spans lie at 23 to 43 (ISDFFIAVAYFSIPLELIYFV), 53 to 73 (WVLVQFGAFIVLCGATHLINL), and 95 to 115 (AAVSCVTALMLVHIIPDLLSV). Cu cation contacts are provided by C65 and H69. Residues 158–307 (DRHTILKTTL…VVADQVAVAL (150 aa)) enclose the GAF domain. The Histidine kinase domain maps to 350 to 587 (VMNHEMRTPM…TVTFVVKLGI (238 aa)). Position 353 is a phosphohistidine; by autocatalysis (H353). A Response regulatory domain is found at 615–732 (KVLLMDENGI…KMRNVLSKLL (118 aa)). Position 663 is a 4-aspartylphosphate (D663).

This sequence belongs to the ethylene receptor family. In terms of assembly, homodimer; disulfide-linked. Cu cation is required as a cofactor. Post-translationally, activation probably requires a transfer of a phosphate group between a His in the transmitter domain and an Asp of the receiver domain.

The protein resides in the endoplasmic reticulum membrane. It catalyses the reaction ATP + protein L-histidine = ADP + protein N-phospho-L-histidine.. In terms of biological role, may act early in the ethylene signal transduction pathway, possibly as an ethylene receptor, or as a regulator of the pathway. This chain is Ethylene receptor 1 (ETR1), found in Pelargonium hortorum (Common geranium).